We begin with the raw amino-acid sequence, 411 residues long: Serpin A3-2 (411 aa).

The first 24 residues, 1-24 (MRAERTSFLLALGLLVAGIRSVHC), serve as a signal peptide directing secretion. 4 N-linked (GlcNAc...) asparagine glycosylation sites follow: Asn100, Asn180, Asn230, and Asn264.

This sequence belongs to the serpin family. In terms of assembly, homodimer.

Its subcellular location is the cytoplasmic vesicle. It localises to the secretory vesicle. It is found in the chromaffin granule. The protein localises to the secreted. In terms of biological role, serine protease inhibitor. The polypeptide is Serpin A3-2 (Bos taurus (Bovine)).